The following is a 605-amino-acid chain: Pescadillo homolog (605 aa).

Residues 346–440 (PVATLFSEFV…ELVPANLYLP (95 aa)) form the BRCT domain. Residues 449–553 (SPWGDSTGYD…RKATEEEEEK (105 aa)) form a disordered region. Over residues 461-508 (AENDEDVEGSDAEEIDESADEDAESEEVEEDDTAAVALNEDDEDDEDE) the composition is skewed to acidic residues. Basic and acidic residues predominate over residues 526 to 537 (EAKDVIDSESSD). Positions 533–605 (SESSDKKKKK…KAKLAKLDKK (73 aa)) form a coiled coil.

It belongs to the pescadillo family. As to quaternary structure, component of the NOP7 complex, composed of ERB1, NOP7 and YTM1. The complex is held together by ERB1, which interacts with NOP7 via its N-terminal domain and with YTM1 via a high-affinity interaction between the seven-bladed beta-propeller domains of the 2 proteins. The NOP7 complex associates with the 66S pre-ribosome.

It is found in the nucleus. Its subcellular location is the nucleolus. It localises to the nucleoplasm. Component of the NOP7 complex, which is required for maturation of the 25S and 5.8S ribosomal RNAs and formation of the 60S ribosome. The protein is Pescadillo homolog of Kluyveromyces lactis (strain ATCC 8585 / CBS 2359 / DSM 70799 / NBRC 1267 / NRRL Y-1140 / WM37) (Yeast).